The primary structure comprises 542 residues: Plasminogen-binding protein PgbB (542 aa).

The interval 399 to 542 (KSASKKSQKG…RRKALEMNKK (144 aa)) is disordered. 2 stretches are compositionally biased toward basic and acidic residues: residues 418–435 (QERHKAKENKQPLEENKV) and 447–456 (VKTRRPEPIR). The segment covering 457 to 467 (DQNNATQQGET) has biased composition (polar residues). A compositionally biased stretch (basic and acidic residues) spans 481-542 (NAAKKEVPKP…RRKALEMNKK (62 aa)).

The protein resides in the cell surface. Its function is as follows. Binds plasminogen, specifically, and in a concentration and lysine-dependent manner. Plasminogen is the precursor of plasmin, a serine protease that cleaves fibrin, fibronectin, laminin and vitronectin. Acquisition of plasminogen/plasmin could enable H.pylori to degrade host components. This chain is Plasminogen-binding protein PgbB (pgbB), found in Helicobacter pylori (strain ATCC 700392 / 26695) (Campylobacter pylori).